A 227-amino-acid polypeptide reads, in one-letter code: Glutathione S-transferase U7 (227 aa).

Positions 8–87 (EEVKLLGMWA…YIDETWRDNP (80 aa)) constitute a GST N-terminal domain. Residues 18-19 (SP), 44-45 (NK), 58-59 (MI), and 71-72 (ES) contribute to the glutathione site. The GST C-terminal domain maps to 92 to 215 (DPYERTMARF…PPEDEHLKYI (124 aa)).

It belongs to the GST superfamily. Tau family.

The protein localises to the cytoplasm. The protein resides in the cytosol. The enzyme catalyses RX + glutathione = an S-substituted glutathione + a halide anion + H(+). Its function is as follows. May be involved in the conjugation of reduced glutathione to a wide number of exogenous and endogenous hydrophobic electrophiles and have a detoxification role against certain herbicides. The chain is Glutathione S-transferase U7 (GSTU7) from Arabidopsis thaliana (Mouse-ear cress).